We begin with the raw amino-acid sequence, 99 residues long: U2-theraphotoxin-Lsp1a (99 aa).

Positions 1-22 (MNTIQVIIFAVVLVLTVTVGQA) are cleaved as a signal peptide. The propeptide occupies 23–57 (DEDSPEASLLRKLKEAEASLFGQNLEESRNSRQKR). 3 disulfide bridges follow: cysteine 58–cysteine 73, cysteine 65–cysteine 78, and cysteine 72–cysteine 93.

This sequence belongs to the neurotoxin 14 (magi-1) family. 08 (Ltx-4) subfamily. In terms of tissue distribution, expressed by the venom gland.

It is found in the secreted. Its function is as follows. Insecticidal neurotoxin. This is U2-theraphotoxin-Lsp1a from Lasiodora sp. (strain IBSP 8539) (Brazilian salmon pink birdeater).